The sequence spans 129 residues: Photosystem II extrinsic protein V (129 aa).

Cys35, Cys38, His39, and His90 together coordinate heme c.

This sequence belongs to the cytochrome c family. PsbV subfamily. PSII is composed of 1 copy each of membrane proteins PsbA, PsbB, PsbC, PsbD, PsbE, PsbF, PsbH, PsbI, PsbJ, PsbK, PsbL, PsbM, PsbT, PsbX, PsbY, PsbZ, Psb30/Ycf12, peripheral proteins PsbO, CyanoQ (PsbQ), PsbU, PsbV and a large number of cofactors. It forms dimeric complexes. Homodimer in crystal structure. Heme c is required as a cofactor.

It localises to the cellular thylakoid membrane. Functionally, one of the extrinsic, lumenal subunits of photosystem II (PSII). PSII is a light-driven water plastoquinone oxidoreductase, using light energy to abstract electrons from H(2)O, generating a proton gradient subsequently used for ATP formation. The extrinsic proteins stabilize the structure of photosystem II oxygen-evolving complex (OEC), the ion environment of oxygen evolution and protect the OEC against heat-induced inactivation. Low-potential cytochrome c that plays a role in the OEC of PSII. This Limnospira maxima (Arthrospira maxima) protein is Photosystem II extrinsic protein V.